The primary structure comprises 324 residues: Delta-aminolevulinic acid dehydratase (324 aa).

Residues cysteine 118, cysteine 120, and cysteine 128 each contribute to the Zn(2+) site. The active-site Schiff-base intermediate with substrate is lysine 195. Residues arginine 205 and arginine 217 each coordinate 5-aminolevulinate. Mg(2+) is bound at residue glutamate 233. Lysine 248 functions as the Schiff-base intermediate with substrate in the catalytic mechanism. 2 residues coordinate 5-aminolevulinate: serine 274 and tyrosine 313.

It belongs to the ALAD family. As to quaternary structure, homooctamer. It depends on Zn(2+) as a cofactor.

The catalysed reaction is 2 5-aminolevulinate = porphobilinogen + 2 H2O + H(+). Its pathway is porphyrin-containing compound metabolism; protoporphyrin-IX biosynthesis; coproporphyrinogen-III from 5-aminolevulinate: step 1/4. In terms of biological role, catalyzes an early step in the biosynthesis of tetrapyrroles. Binds two molecules of 5-aminolevulinate per subunit, each at a distinct site, and catalyzes their condensation to form porphobilinogen. This chain is Delta-aminolevulinic acid dehydratase (hemB), found in Staphylococcus aureus (strain NCTC 8325 / PS 47).